The following is a 336-amino-acid chain: Ferredoxin--NADP reductase 1 (336 aa).

FAD-binding residues include Glu-37, Lys-45, Phe-50, Val-90, Leu-125, Asp-287, and Thr-328.

Belongs to the ferredoxin--NADP reductase type 2 family. Homodimer. The cofactor is FAD.

The catalysed reaction is 2 reduced [2Fe-2S]-[ferredoxin] + NADP(+) + H(+) = 2 oxidized [2Fe-2S]-[ferredoxin] + NADPH. In Bacillus subtilis (strain 168), this protein is Ferredoxin--NADP reductase 1 (ycgT).